Here is a 97-residue protein sequence, read N- to C-terminus: Citrate lyase acyl carrier protein (97 aa).

Serine 14 bears the O-(phosphoribosyl dephospho-coenzyme A)serine mark.

It belongs to the CitD family. In terms of assembly, oligomer with a subunit composition of (alpha,beta,gamma)6.

It is found in the cytoplasm. Covalent carrier of the coenzyme of citrate lyase. This Oenococcus oeni (strain ATCC BAA-331 / PSU-1) protein is Citrate lyase acyl carrier protein.